The primary structure comprises 335 residues: Homeobox protein DBX1 (335 aa).

Disordered stretches follow at residues 56-102 (RSIP…LSPA) and 240-335 (KERE…ITVS). A compositionally biased stretch (low complexity) spans 83–95 (GSPGSGSRRGSSP). Residues 181–240 (GMLRRAVFSDVQRKALEKTFQKQKYISKPDRKKLASKLGLKDSQVKIWFQNRRMKWRNSK) constitute a DNA-binding region (homeobox). The span at 299 to 317 (GPLPASPAHSSSPGKPSDF) shows a compositional bias: low complexity. Acidic residues predominate over residues 318–335 (SDSDEDEEGEEDEEITVS).

It belongs to the H2.0 homeobox family.

Its subcellular location is the nucleus. Functionally, could have a role in patterning the central nervous system during embryogenesis. Has a key role in regulating the distinct phenotypic features that distinguish two major classes of ventral interneurons, V0 and V1 neurons. Regulates the transcription factor profile, neurotransmitter phenotype, intraspinal migratory path and axonal trajectory of V0 neurons, features that differentiate them from an adjacent set of V1 neurons. The polypeptide is Homeobox protein DBX1 (Dbx1) (Rattus norvegicus (Rat)).